A 99-amino-acid polypeptide reads, in one-letter code: NADH-quinone oxidoreductase subunit K (99 aa).

Helical transmembrane passes span 3-23 (PANY…GVLV), 28-48 (IVVF…LVTF), and 59-79 (VMAF…LAII).

It belongs to the complex I subunit 4L family. In terms of assembly, NDH-1 is composed of 14 different subunits. Subunits NuoA, H, J, K, L, M, N constitute the membrane sector of the complex.

The protein resides in the cell membrane. It catalyses the reaction a quinone + NADH + 5 H(+)(in) = a quinol + NAD(+) + 4 H(+)(out). Functionally, NDH-1 shuttles electrons from NADH, via FMN and iron-sulfur (Fe-S) centers, to quinones in the respiratory chain. The immediate electron acceptor for the enzyme in this species is believed to be a menaquinone. Couples the redox reaction to proton translocation (for every two electrons transferred, four hydrogen ions are translocated across the cytoplasmic membrane), and thus conserves the redox energy in a proton gradient. The chain is NADH-quinone oxidoreductase subunit K from Frankia alni (strain DSM 45986 / CECT 9034 / ACN14a).